We begin with the raw amino-acid sequence, 511 residues long: MRLEDLARVINPSEAGGSLALEIEGLYCDSRQVRSGGLFFALRGVATDGHDYIVASRDRGAVAVVVEDPSRVPEGMTWLKVDDARLAMSRAAAAFYGNPTDGIPVVGITGTNGKTTTTYLVEAVMARAGIPVAVLGTISYRFGDKTIPAPHTTPESVDLQRTIRDLVDRGAQGVVMEVSSHALEQRRVDGCRFDVGVFTNLTRDHLDYHRDMESYFESKARLFTELLAADDTKPRRAAVINVDDPYGARLASDAVAPVVSYGLSPSVMVRAEMVTFSVDGISGTLVTPLGTIPFHSRLLGRFNLYNILAAVAAGVALGLSPDAIRGGIEGDVRVPGRLERVDNDHGITVLVDYAHTGDALENVLKTVAEIATGRIITVFGCGGDRDRGKRPVMGEIAGRFSDLSIVTSDNPRTEDAGAIIGEILGGIRSLGLREYGAEELITGFDAKGFAAVESRREAIRLAARVARPGDVLLLAGKGHEDYQIIGTMKHHFDDREEVAAAFRELSSKGQG.

Ser-30 serves as a coordination point for UDP-N-acetyl-alpha-D-muramoyl-L-alanyl-D-glutamate. Gly-110 to Thr-116 lines the ATP pocket. Residues Thr-152–Thr-153, Ser-179, Gln-185, and Arg-187 contribute to the UDP-N-acetyl-alpha-D-muramoyl-L-alanyl-D-glutamate site. Lys-219 bears the N6-carboxylysine mark. Meso-2,6-diaminopimelate-binding positions include Arg-385, Asp-409–Arg-412, Gly-476, and Glu-480. A Meso-diaminopimelate recognition motif motif is present at residues Asp-409–Arg-412.

Belongs to the MurCDEF family. MurE subfamily. The cofactor is Mg(2+). In terms of processing, carboxylation is probably crucial for Mg(2+) binding and, consequently, for the gamma-phosphate positioning of ATP.

The protein localises to the cytoplasm. It carries out the reaction UDP-N-acetyl-alpha-D-muramoyl-L-alanyl-D-glutamate + meso-2,6-diaminopimelate + ATP = UDP-N-acetyl-alpha-D-muramoyl-L-alanyl-gamma-D-glutamyl-meso-2,6-diaminopimelate + ADP + phosphate + H(+). It functions in the pathway cell wall biogenesis; peptidoglycan biosynthesis. Functionally, catalyzes the addition of meso-diaminopimelic acid to the nucleotide precursor UDP-N-acetylmuramoyl-L-alanyl-D-glutamate (UMAG) in the biosynthesis of bacterial cell-wall peptidoglycan. This Geobacter metallireducens (strain ATCC 53774 / DSM 7210 / GS-15) protein is UDP-N-acetylmuramoyl-L-alanyl-D-glutamate--2,6-diaminopimelate ligase.